The chain runs to 304 residues: L-threonate dehydrogenase (304 aa).

Residues 7–35 (YAVAVIGLGSMGFGAAASCINAGLTTYGV) and threonine 102 each bind NAD(+). Lysine 178 is a catalytic residue. Lysine 246 is an NAD(+) binding site.

The protein belongs to the HIBADH-related family. L-threonate dehydrogenase subfamily.

It catalyses the reaction L-threonate + NAD(+) = 2-dehydro-L-erythronate + NADH + H(+). In terms of biological role, catalyzes oxidation of L-threonate to 2-oxo-tetronate. Can use either NAD(+) or NADP(+) as cosubstrate, with a preference for NAD(+). This is L-threonate dehydrogenase from Pectobacterium atrosepticum (strain SCRI 1043 / ATCC BAA-672) (Erwinia carotovora subsp. atroseptica).